Consider the following 162-residue polypeptide: uncharacterized protein (162 aa).

This is an uncharacterized protein from Homo sapiens (Human).